A 151-amino-acid chain; its full sequence is 3-hydroxyacyl-[acyl-carrier-protein] dehydratase FabZ (151 aa).

H54 is a catalytic residue.

The protein belongs to the thioester dehydratase family. FabZ subfamily.

The protein resides in the cytoplasm. It catalyses the reaction a (3R)-hydroxyacyl-[ACP] = a (2E)-enoyl-[ACP] + H2O. Its function is as follows. Involved in unsaturated fatty acids biosynthesis. Catalyzes the dehydration of short chain beta-hydroxyacyl-ACPs and long chain saturated and unsaturated beta-hydroxyacyl-ACPs. This chain is 3-hydroxyacyl-[acyl-carrier-protein] dehydratase FabZ, found in Klebsiella pneumoniae (strain 342).